A 257-amino-acid polypeptide reads, in one-letter code: UPF0246 protein KPK_4750 (257 aa).

It belongs to the UPF0246 family.

In Klebsiella pneumoniae (strain 342), this protein is UPF0246 protein KPK_4750.